Consider the following 413-residue polypeptide: Arginine biosynthesis bifunctional protein ArgJ (413 aa).

The substrate site is built by Thr-154, Lys-180, Thr-191, Glu-277, Asn-408, and Thr-413. The Nucleophile role is filled by Thr-191.

Belongs to the ArgJ family. In terms of assembly, heterotetramer of two alpha and two beta chains.

The protein resides in the cytoplasm. It carries out the reaction N(2)-acetyl-L-ornithine + L-glutamate = N-acetyl-L-glutamate + L-ornithine. It catalyses the reaction L-glutamate + acetyl-CoA = N-acetyl-L-glutamate + CoA + H(+). It participates in amino-acid biosynthesis; L-arginine biosynthesis; L-ornithine and N-acetyl-L-glutamate from L-glutamate and N(2)-acetyl-L-ornithine (cyclic): step 1/1. The protein operates within amino-acid biosynthesis; L-arginine biosynthesis; N(2)-acetyl-L-ornithine from L-glutamate: step 1/4. Its function is as follows. Catalyzes two activities which are involved in the cyclic version of arginine biosynthesis: the synthesis of N-acetylglutamate from glutamate and acetyl-CoA as the acetyl donor, and of ornithine by transacetylation between N(2)-acetylornithine and glutamate. This Synechocystis sp. (strain ATCC 27184 / PCC 6803 / Kazusa) protein is Arginine biosynthesis bifunctional protein ArgJ.